Here is a 626-residue protein sequence, read N- to C-terminus: MSKVIGIDLGTTNSCVSIYERGESKVIPNKEGKNTTPSVVAFTDKGEILVGDTAKRQAVTNPEKTIFSIKRIMGLMMNEKNAKEAKNRLPYHIVDRNGACAVEIAGKTYTPQEISAKVLMKLKEDAEAFLGESVVDAVITVPAYFNDSQRKATKEAGTIAGLNVLRIINEPTAAALAYGLDKKEAEKIVVYDLGGGTFDVTVLETGDSVVEVLATGGNAFLGGDDFDNRLIDFLVSEFKSETGIDLKNDVMALQRLKEAAENAKKELSSAMETTINLPFITADATGPKHLTKTLSRAKFEGMIDDLVGETITKINEVVKDAGISKGDIKEVVMVGGSTRVPLVQEEVKKAFSKELNKSVNPDEVVAIGAAIQGAVIKGDVKDVLLLDVTPLSLGIETLGGVMSKLIEKGTTIPTKKSQTFSTAEDNQSAVTINVLQGEREFAKDNKSLGNFNLEGIMPAPRGVPQIEVTFDIDANGILTVSAKDKASGKAQNITISGSSGLSEEEINKMVNDAEAHKEDDKKRKEAVEARNAADSLAHQTEKSLSEMGEKIPAEDRAKIEAALNDLKEVLKDESASKEQIDVKVKALSEVSHKLAEAMYKDQNAGAADGGAEKKKKDDDVIDAEVE.

Residue Thr-197 is modified to Phosphothreonine; by autocatalysis. Basic and acidic residues-rich tracts occupy residues 512-528 (DAEA…EAVE) and 539-551 (QTEK…GEKI). 2 disordered regions span residues 512–551 (DAEA…GEKI) and 601–626 (DQNA…AEVE).

Belongs to the heat shock protein 70 family.

In terms of biological role, acts as a chaperone. The sequence is that of Chaperone protein DnaK from Campylobacter fetus subsp. fetus (strain 82-40).